Consider the following 829-residue polypeptide: Leucine--tRNA ligase (829 aa).

The short motif at 40–50 (PYPSGNIHMGH) is the 'HIGH' region element. Residues 594–598 (KMSKS) carry the 'KMSKS' region motif. Residue Lys-597 participates in ATP binding.

It belongs to the class-I aminoacyl-tRNA synthetase family.

The protein localises to the cytoplasm. It catalyses the reaction tRNA(Leu) + L-leucine + ATP = L-leucyl-tRNA(Leu) + AMP + diphosphate. The protein is Leucine--tRNA ligase of Anaplasma marginale (strain St. Maries).